Here is a 164-residue protein sequence, read N- to C-terminus: MEMTNAQRLILSNQYKMMTMLDPTNAERYRRLQTIIERGYGLQMRELDREFGELKEETCRTIIDIMEMYHALHVSWTNLKDAQTIDERRVTFLGFDAATEARYLGYVRFMVNVEGRYTHFDAGTHGFNAQTPMWEKYQRMLNVWHSCPRQYHLSSNEINQIINA.

The protein belongs to the UPF0304 family.

This chain is UPF0304 protein CKO_00501, found in Citrobacter koseri (strain ATCC BAA-895 / CDC 4225-83 / SGSC4696).